Consider the following 342-residue polypeptide: Heat-inducible transcription repressor HrcA (342 aa).

It belongs to the HrcA family.

Negative regulator of class I heat shock genes (grpE-dnaK-dnaJ and groELS operons). Prevents heat-shock induction of these operons. This Methylibium petroleiphilum (strain ATCC BAA-1232 / LMG 22953 / PM1) protein is Heat-inducible transcription repressor HrcA.